Here is a 248-residue protein sequence, read N- to C-terminus: 3-deoxy-manno-octulosonate cytidylyltransferase (248 aa).

The protein belongs to the KdsB family.

The protein resides in the cytoplasm. It catalyses the reaction 3-deoxy-alpha-D-manno-oct-2-ulosonate + CTP = CMP-3-deoxy-beta-D-manno-octulosonate + diphosphate. It functions in the pathway nucleotide-sugar biosynthesis; CMP-3-deoxy-D-manno-octulosonate biosynthesis; CMP-3-deoxy-D-manno-octulosonate from 3-deoxy-D-manno-octulosonate and CTP: step 1/1. It participates in bacterial outer membrane biogenesis; lipopolysaccharide biosynthesis. In terms of biological role, activates KDO (a required 8-carbon sugar) for incorporation into bacterial lipopolysaccharide in Gram-negative bacteria. The chain is 3-deoxy-manno-octulosonate cytidylyltransferase from Shigella boydii serotype 18 (strain CDC 3083-94 / BS512).